The chain runs to 465 residues: Box C/D snoRNA protein 1 (465 aa).

A disordered region spans residues 1-72 (MEFAAENEGK…GSRQRPEEIP (72 aa)). Ser-25 carries the phosphoserine modification. Over residues 56–70 (EIGDGEEGSRQRPEE) the composition is skewed to basic and acidic residues. Glycyl lysine isopeptide (Lys-Gly) (interchain with G-Cter in SUMO2) cross-links involve residues Lys-79, Lys-108, Lys-118, Lys-138, Lys-148, Lys-157, Lys-168, Lys-178, and Lys-195. Zn(2+) is bound by residues Cys-215, Cys-218, Cys-227, Cys-230, Cys-235, Cys-239, His-243, and Cys-249. The HIT-type zinc-finger motif lies at 215–249 (CETCGTEEAKYRCPRCMRYSCSLPCVKKHKAELTC). Residue Lys-454 forms a Glycyl lysine isopeptide (Lys-Gly) (interchain with G-Cter in SUMO2) linkage.

Belongs to the BCD1 family. Interacts with FBL, SNU13, NOP58, NUFIP1, RUVBL1, RUVBL2 and TAF9. Interacts (via HIT-type zinc finger) with the RUVBL1/RUVBL2 complex in the presence of ADP.

Required for box C/D snoRNAs accumulation involved in snoRNA processing, snoRNA transport to the nucleolus and ribosome biogenesis. This chain is Box C/D snoRNA protein 1 (ZNHIT6), found in Pongo abelii (Sumatran orangutan).